Here is a 213-residue protein sequence, read N- to C-terminus: Outer-membrane lipoprotein carrier protein (213 aa).

Positions 1-23 are cleaved as a signal peptide; the sequence is MKKLLKQSLLGFALVSMTGAAFA.

Belongs to the LolA family. In terms of assembly, monomer.

Its subcellular location is the periplasm. Participates in the translocation of lipoproteins from the inner membrane to the outer membrane. Only forms a complex with a lipoprotein if the residue after the N-terminal Cys is not an aspartate (The Asp acts as a targeting signal to indicate that the lipoprotein should stay in the inner membrane). This is Outer-membrane lipoprotein carrier protein from Actinobacillus pleuropneumoniae serotype 3 (strain JL03).